Consider the following 166-residue polypeptide: EndA-like protein (166 aa).

Belongs to the tRNA-intron endonuclease family. Archaeal short subfamily.

The chain is EndA-like protein from Methanopyrus kandleri (strain AV19 / DSM 6324 / JCM 9639 / NBRC 100938).